A 401-amino-acid chain; its full sequence is Imidazolonepropionase (401 aa).

His-66 and His-68 together coordinate Fe(3+). Zn(2+)-binding residues include His-66 and His-68. 4-imidazolone-5-propanoate-binding residues include Arg-75, Tyr-138, and His-171. Residue Tyr-138 participates in N-formimidoyl-L-glutamate binding. Fe(3+) is bound at residue His-236. His-236 is a Zn(2+) binding site. Gln-239 is a 4-imidazolone-5-propanoate binding site. Position 311 (Asp-311) interacts with Fe(3+). Residue Asp-311 coordinates Zn(2+). N-formimidoyl-L-glutamate-binding residues include Asn-313 and Gly-315. Residue Thr-316 participates in 4-imidazolone-5-propanoate binding.

This sequence belongs to the metallo-dependent hydrolases superfamily. HutI family. Requires Zn(2+) as cofactor. The cofactor is Fe(3+).

The protein localises to the cytoplasm. It catalyses the reaction 4-imidazolone-5-propanoate + H2O = N-formimidoyl-L-glutamate. It participates in amino-acid degradation; L-histidine degradation into L-glutamate; N-formimidoyl-L-glutamate from L-histidine: step 3/3. Catalyzes the hydrolytic cleavage of the carbon-nitrogen bond in imidazolone-5-propanoate to yield N-formimidoyl-L-glutamate. It is the third step in the universal histidine degradation pathway. The polypeptide is Imidazolonepropionase (Acinetobacter baumannii (strain AB307-0294)).